Consider the following 395-residue polypeptide: MATVDRWLLPDGIEEVLPPEAARIEVARRQVLDLFQSWGYEFVVTPHIEYLESLLTGAGQDLDLRTFKVIDPQSGRQMGFRADITPQVARIDAHTLRREGPSRLCYAGSVLHAQPRALSSSRSPIQLGAELYGDASPSSDVEVISLMLAMLQLADVPDVHMDLGHVGIYRGLAQAAGLSGAVEQQLFDALQRKAIDEVISLTEGLPADLADMLRSLVDLCGSREVLGDARRRLAGAPTSVLLALDELLTIAERLSVRFPDLPLYFDLGELRGYHYHTGVVFAVFVPGVGQSIAQGGRYDDIGADFGRARPATGFSTDLKTLVTLGRAEVELPSGGIWMPDNTDAALWQTVCRLRSEGQRVVQALPGQPLAAAREADCDRQLIQQNGLWQVLPLAS.

It belongs to the class-II aminoacyl-tRNA synthetase family. HisZ subfamily. In terms of assembly, heteromultimer composed of HisG and HisZ subunits.

The protein localises to the cytoplasm. It functions in the pathway amino-acid biosynthesis; L-histidine biosynthesis; L-histidine from 5-phospho-alpha-D-ribose 1-diphosphate: step 1/9. Required for the first step of histidine biosynthesis. May allow the feedback regulation of ATP phosphoribosyltransferase activity by histidine. This is ATP phosphoribosyltransferase regulatory subunit from Pseudomonas fluorescens (strain ATCC BAA-477 / NRRL B-23932 / Pf-5).